The following is a 439-amino-acid chain: Xylose isomerase (439 aa).

Catalysis depends on residues H101 and D104. 7 residues coordinate Mg(2+): E232, E268, H271, D296, D307, D309, and D339.

It belongs to the xylose isomerase family. In terms of assembly, homotetramer. Requires Mg(2+) as cofactor.

It localises to the cytoplasm. It catalyses the reaction alpha-D-xylose = alpha-D-xylulofuranose. The protein is Xylose isomerase of Photobacterium profundum (strain SS9).